The following is a 177-amino-acid chain: Tubulin beta chain (177 aa).

A disordered region spans residues 156 to 177; the sequence is YQDATAEEEGEFDEEEGDEEAA. Positions 160-177 are enriched in acidic residues; the sequence is TAEEEGEFDEEEGDEEAA.

This sequence belongs to the tubulin family. In terms of assembly, dimer of alpha and beta chains. A typical microtubule is a hollow water-filled tube with an outer diameter of 25 nm and an inner diameter of 15 nM. Alpha-beta heterodimers associate head-to-tail to form protofilaments running lengthwise along the microtubule wall with the beta-tubulin subunit facing the microtubule plus end conferring a structural polarity. Microtubules usually have 13 protofilaments but different protofilament numbers can be found in some organisms and specialized cells. Mg(2+) serves as cofactor.

It localises to the cytoplasm. It is found in the cytoskeleton. In terms of biological role, tubulin is the major constituent of microtubules, a cylinder consisting of laterally associated linear protofilaments composed of alpha- and beta-tubulin heterodimers. Microtubules grow by the addition of GTP-tubulin dimers to the microtubule end, where a stabilizing cap forms. Below the cap, tubulin dimers are in GDP-bound state, owing to GTPase activity of alpha-tubulin. The polypeptide is Tubulin beta chain (Lytechinus pictus (Painted sea urchin)).